A 511-amino-acid polypeptide reads, in one-letter code: Cobyric acid synthase (511 aa).

Residues 251-443 (LLDIAIICLP…IHGIFDNDIF (193 aa)) form the GATase cobBQ-type domain. The active-site Nucleophile is cysteine 332. Histidine 435 is a catalytic residue.

This sequence belongs to the CobB/CobQ family. CobQ subfamily.

It participates in cofactor biosynthesis; adenosylcobalamin biosynthesis. In terms of biological role, catalyzes amidations at positions B, D, E, and G on adenosylcobyrinic A,C-diamide. NH(2) groups are provided by glutamine, and one molecule of ATP is hydrogenolyzed for each amidation. The polypeptide is Cobyric acid synthase (Listeria innocua serovar 6a (strain ATCC BAA-680 / CLIP 11262)).